We begin with the raw amino-acid sequence, 272 residues long: Undecaprenyl-diphosphatase (272 aa).

Transmembrane regions (helical) follow at residues 5–25 (YSLF…FLPV), 45–65 (AKTF…VVFW), 88–108 (HLTL…GLAF), 114–134 (ALFD…LLLA), 153–172 (YRQA…PGFS), 189–209 (YAAS…ASGL), 221–241 (GDLP…LIAI), and 251–271 (ISFV…YWVF).

This sequence belongs to the UppP family.

The protein resides in the cell inner membrane. The catalysed reaction is di-trans,octa-cis-undecaprenyl diphosphate + H2O = di-trans,octa-cis-undecaprenyl phosphate + phosphate + H(+). Its function is as follows. Catalyzes the dephosphorylation of undecaprenyl diphosphate (UPP). Confers resistance to bacitracin. The polypeptide is Undecaprenyl-diphosphatase (Yersinia pseudotuberculosis serotype IB (strain PB1/+)).